The sequence spans 479 residues: Aldehyde dehydrogenase family 3 member B3 (479 aa).

Residues Glu-223 and Cys-257 contribute to the active site. A lipid anchor (S-geranylgeranyl cysteine) is attached at Cys-476. The propeptide at Thr-477–Leu-479 is removed in mature form.

This sequence belongs to the aldehyde dehydrogenase family. Post-translationally, geranylgeranylation is important for membrane localization and enzyme activity. Expressed in testis, kidney, small intestine, spleen, white adipose tissue, liver and lung.

It localises to the cell membrane. It carries out the reaction an aldehyde + NAD(+) + H2O = a carboxylate + NADH + 2 H(+). The enzyme catalyses hexadecanoate + NADH + 2 H(+) = hexadecanal + NAD(+) + H2O. The catalysed reaction is octanal + NAD(+) + H2O = octanoate + NADH + 2 H(+). Oxidizes medium and long chain aldehydes into non-toxic fatty acids. This chain is Aldehyde dehydrogenase family 3 member B3, found in Mus musculus (Mouse).